We begin with the raw amino-acid sequence, 270 residues long: Phosphatidate cytidylyltransferase (270 aa).

The next 7 membrane-spanning stretches (helical) occupy residues Leu-19–Ala-39, Thr-53–Leu-73, Gly-76–Trp-96, Gly-101–Arg-121, Phe-126–Tyr-146, Leu-183–Leu-203, and Ala-248–Phe-268.

This sequence belongs to the CDS family.

The protein resides in the cell inner membrane. The enzyme catalyses a 1,2-diacyl-sn-glycero-3-phosphate + CTP + H(+) = a CDP-1,2-diacyl-sn-glycerol + diphosphate. It functions in the pathway phospholipid metabolism; CDP-diacylglycerol biosynthesis; CDP-diacylglycerol from sn-glycerol 3-phosphate: step 3/3. In Brucella melitensis biotype 1 (strain ATCC 23456 / CCUG 17765 / NCTC 10094 / 16M), this protein is Phosphatidate cytidylyltransferase (cdsA).